Consider the following 473-residue polypeptide: Transposase for insertion sequence element IS1151 (473 aa).

Belongs to the transposase 11 family.

Its function is as follows. Involved in the transposition of the insertion sequence. The chain is Transposase for insertion sequence element IS1151 (tnp) from Clostridium perfringens.